The primary structure comprises 174 residues: UPF0340 protein MW2038 (174 aa).

The protein belongs to the UPF0340 family.

The protein is UPF0340 protein MW2038 of Staphylococcus aureus (strain MW2).